Here is a 234-residue protein sequence, read N- to C-terminus: Probable chemoreceptor glutamine deamidase CheD (234 aa).

It belongs to the CheD family.

It carries out the reaction L-glutaminyl-[protein] + H2O = L-glutamyl-[protein] + NH4(+). Its function is as follows. Probably deamidates glutamine residues to glutamate on methyl-accepting chemotaxis receptors (MCPs), playing an important role in chemotaxis. In Burkholderia mallei (strain NCTC 10247), this protein is Probable chemoreceptor glutamine deamidase CheD.